Consider the following 167-residue polypeptide: MVEKIRIIGIDPGLRRTGWGIIDFLGNHMHFVASGTLHSDAQLNLASRLHQLHKGLSEVVHQFMPHEAAVEHVFVNKDATATLKLGQARAIALLVPAQAGLPVFEYAPNTIKKSVIGVGHGAKEQIHMMVKRLLPRAEFDGHDAADALALVICHSAHRTNFAHRIKG.

Active-site residues include Asp-11, Glu-71, and Asp-143. Positions 11, 71, and 143 each coordinate Mg(2+).

This sequence belongs to the RuvC family. Homodimer which binds Holliday junction (HJ) DNA. The HJ becomes 2-fold symmetrical on binding to RuvC with unstacked arms; it has a different conformation from HJ DNA in complex with RuvA. In the full resolvosome a probable DNA-RuvA(4)-RuvB(12)-RuvC(2) complex forms which resolves the HJ. It depends on Mg(2+) as a cofactor.

Its subcellular location is the cytoplasm. The enzyme catalyses Endonucleolytic cleavage at a junction such as a reciprocal single-stranded crossover between two homologous DNA duplexes (Holliday junction).. Functionally, the RuvA-RuvB-RuvC complex processes Holliday junction (HJ) DNA during genetic recombination and DNA repair. Endonuclease that resolves HJ intermediates. Cleaves cruciform DNA by making single-stranded nicks across the HJ at symmetrical positions within the homologous arms, yielding a 5'-phosphate and a 3'-hydroxyl group; requires a central core of homology in the junction. The consensus cleavage sequence is 5'-(A/T)TT(C/G)-3'. Cleavage occurs on the 3'-side of the TT dinucleotide at the point of strand exchange. HJ branch migration catalyzed by RuvA-RuvB allows RuvC to scan DNA until it finds its consensus sequence, where it cleaves and resolves the cruciform DNA. This is Crossover junction endodeoxyribonuclease RuvC from Bartonella bacilliformis (strain ATCC 35685 / KC583 / Herrer 020/F12,63).